The primary structure comprises 119 residues: MVLPLPWLSRYHFLRLLLPSWSLAPQGSHGCCSQNPKASMEEQTSSRGNGKMTSPPRGPGTHRTAELARAEELLEQQLELYQALLEGQEGAWEAQALVLKIQKLKEQMRRHQESLGGGA.

A mitochondrion-targeting transit peptide spans 1–24 (MVLPLPWLSRYHFLRLLLPSWSLA). Residues 25-65 (PQGSHGCCSQNPKASMEEQTSSRGNGKMTSPPRGPGTHRTA) are disordered. The span at 31 to 52 (CCSQNPKASMEEQTSSRGNGKM) shows a compositional bias: polar residues. A coiled-coil region spans residues 62-116 (HRTAELARAEELLEQQLELYQALLEGQEGAWEAQALVLKIQKLKEQMRRHQESLG).

In terms of tissue distribution, widely expressed. Expressed in adult and fetal liver, kidney and lung. Expressed in fetal brain. Weakly expressed in fetal spleen.

Its subcellular location is the mitochondrion. This is Mitochondrial coiled-coil domain protein 1 (MCCD1) from Homo sapiens (Human).